The following is a 1050-amino-acid chain: Toluene efflux pump membrane transporter TtgB (1050 aa).

12 consecutive transmembrane segments (helical) span residues 10–30 (IFAWVIALVIMLVGALSILKL), 339–359 (GVIHTLIEAVVLVFLVMYLFL), 370–390 (MTVPVVLLGTFGILAAAGFSI), 393–413 (LTMFAMVLAIGLLVDDAIVVV), 440–460 (GALVGIALVLSAVLLPMAFFG), 472–492 (ITIVSAMGLSVLVALIFTPAL), 539–559 (VPFLLAYALIVVGMIWLFARI), 871–891 (MPALFALSVLFVFLCLAALYE), 893–913 (WSIPIAVVLVVPLGIIGALIA), 923–943 (VYFLVGLLTTIGLAAKNAILI), 972–992 (IIMTSLAFILGVVPLTIASGA), and 1004–1024 (VIGGMISATVLAIFWVPLFFV).

The protein belongs to the resistance-nodulation-cell division (RND) (TC 2.A.6) family.

It is found in the cell inner membrane. Its function is as follows. The inner membrane transporter component of a constitutive organic solvent efflux system. Involved in export of toluene, styrene, m-xylene, propylbenzene and ethylbenzene. Also exports AMP and the antibiotics carbenicillin, nalidixic acid, chloramphenicol and tetracycline. The chain is Toluene efflux pump membrane transporter TtgB (ttgB) from Pseudomonas putida (strain DOT-T1E).